A 106-amino-acid chain; its full sequence is MPLTPPPDYTRVYTALAIGASIAFFTGLITRNTLPSVGDLQHNLPHGGRYRDGTKSVEYCGPRKLNSVESGSRWTFQPWLLVIVLVALIIALGRQGHNCRACGRSH.

Over 1-8 (MPLTPPPD) the chain is Cytoplasmic. A helical membrane pass occupies residues 9–29 (YTRVYTALAIGASIAFFTGLI). The Lumenal segment spans residues 30–73 (TRNTLPSVGDLQHNLPHGGRYRDGTKSVEYCGPRKLNSVESGSR). A helical membrane pass occupies residues 74–94 (WTFQPWLLVIVLVALIIALGR). Over 95 to 106 (QGHNCRACGRSH) the chain is Cytoplasmic.

This sequence belongs to the Tymovirales TGBp2 protein family.

It is found in the host endoplasmic reticulum membrane. Functionally, plays a role in viral cell-to-cell propagation, by facilitating genome transport to neighboring plant cells through plasmosdesmata,. The chain is Movement protein TGB2 from Lilium (LSV).